The chain runs to 301 residues: Diaminopimelate epimerase (301 aa).

Asn15, Gln47, and Asn67 together coordinate substrate. The Proton donor role is filled by Cys76. Residues 77–78 (GN), Asn163, Asn197, and 215–216 (ER) contribute to the substrate site. Cys224 serves as the catalytic Proton acceptor. Substrate is bound at residue 225 to 226 (GS).

This sequence belongs to the diaminopimelate epimerase family. Homodimer.

The protein resides in the cytoplasm. The catalysed reaction is (2S,6S)-2,6-diaminopimelate = meso-2,6-diaminopimelate. Its pathway is amino-acid biosynthesis; L-lysine biosynthesis via DAP pathway; DL-2,6-diaminopimelate from LL-2,6-diaminopimelate: step 1/1. Catalyzes the stereoinversion of LL-2,6-diaminopimelate (L,L-DAP) to meso-diaminopimelate (meso-DAP), a precursor of L-lysine and an essential component of the bacterial peptidoglycan. In Rhizobium rhizogenes (strain K84 / ATCC BAA-868) (Agrobacterium radiobacter), this protein is Diaminopimelate epimerase.